A 175-amino-acid polypeptide reads, in one-letter code: Cell division protein SepF (175 aa).

The span at 20–29 (RYEDYDDYDD) shows a compositional bias: acidic residues. The segment at 20-88 (RYEDYDDYDD…ERPTPPLRVT (69 aa)) is disordered. Composition is skewed to basic and acidic residues over residues 30 to 47 (AEPH…DLGS) and 54 to 73 (RRMD…RRVS).

The protein belongs to the SepF family. As to quaternary structure, homodimer. Interacts with FtsZ.

The protein localises to the cytoplasm. Cell division protein that is part of the divisome complex and is recruited early to the Z-ring. Probably stimulates Z-ring formation, perhaps through the cross-linking of FtsZ protofilaments. Its function overlaps with FtsA. This chain is Cell division protein SepF, found in Acidothermus cellulolyticus (strain ATCC 43068 / DSM 8971 / 11B).